Reading from the N-terminus, the 234-residue chain is Small ribosomal subunit protein uS3 (234 aa).

Positions 39 to 107 (IRKYVKKELY…EIAVNIKEER (69 aa)) constitute a KH type-2 domain. The segment covering 213-222 (PTEKAEETTS) has biased composition (basic and acidic residues). Residues 213–234 (PTEKAEETTSKPKRRPAKKRGK) are disordered. Over residues 223 to 234 (KPKRRPAKKRGK) the composition is skewed to basic residues.

This sequence belongs to the universal ribosomal protein uS3 family. Part of the 30S ribosomal subunit. Forms a tight complex with proteins S10 and S14.

Its function is as follows. Binds the lower part of the 30S subunit head. Binds mRNA in the 70S ribosome, positioning it for translation. The protein is Small ribosomal subunit protein uS3 of Aliarcobacter butzleri (strain RM4018) (Arcobacter butzleri).